A 584-amino-acid polypeptide reads, in one-letter code: Probable lysosomal cobalamin transporter (584 aa).

A run of 10 helical transmembrane segments spans residues 8–28 (LIWI…STFV), 46–66 (IFTL…VALV), 93–113 (TVVY…IVPF), 144–164 (TLVF…VPVA), 189–209 (ALTF…VIYS), 313–333 (LLGG…MLLT), 350–370 (ILGK…AASV), 376–396 (VIFI…IATI), 421–441 (ATVM…MIVV), and 509–529 (GIVD…VLLI).

The protein belongs to the LIMR family. LMBRD1 subfamily.

The protein resides in the lysosome membrane. Functionally, probable lysosomal cobalamin transporter. Required to export cobalamin from lysosomes allowing its conversion to cofactors. This is Probable lysosomal cobalamin transporter from Coccidioides immitis (strain RS) (Valley fever fungus).